The sequence spans 359 residues: Heat-inducible transcription repressor HrcA (359 aa).

This sequence belongs to the HrcA family.

Functionally, negative regulator of class I heat shock genes (grpE-dnaK-dnaJ and groELS operons). Prevents heat-shock induction of these operons. The polypeptide is Heat-inducible transcription repressor HrcA (Sinorhizobium medicae (strain WSM419) (Ensifer medicae)).